We begin with the raw amino-acid sequence, 59 residues long: MADLKVTQIKSSIGAKKNQRDSLRTLGLRGIRKSVVREDNPQNRGLINVVRHLVTVEEV.

The protein belongs to the universal ribosomal protein uL30 family. In terms of assembly, part of the 50S ribosomal subunit.

In Nocardia farcinica (strain IFM 10152), this protein is Large ribosomal subunit protein uL30.